A 352-amino-acid polypeptide reads, in one-letter code: Histidine biosynthesis bifunctional protein HisB (352 aa).

The tract at residues 1–163 (MKKILFIDRD…MVASAIINDA (163 aa)) is histidinol-phosphatase. Aspartate 8 acts as the Nucleophile in catalysis. Mg(2+) contacts are provided by aspartate 8 and aspartate 10. The active-site Proton donor is the aspartate 10. Positions 91, 93, 99, and 101 each coordinate Zn(2+). Aspartate 128 lines the Mg(2+) pocket. Positions 164 to 352 (RKASVQRKTK…NYLPSTKGVL (189 aa)) are imidazoleglycerol-phosphate dehydratase.

This sequence in the N-terminal section; belongs to the histidinol-phosphatase family. It in the C-terminal section; belongs to the imidazoleglycerol-phosphate dehydratase family. The cofactor is Mg(2+). Zn(2+) serves as cofactor.

The protein localises to the cytoplasm. It carries out the reaction D-erythro-1-(imidazol-4-yl)glycerol 3-phosphate = 3-(imidazol-4-yl)-2-oxopropyl phosphate + H2O. The catalysed reaction is L-histidinol phosphate + H2O = L-histidinol + phosphate. Its pathway is amino-acid biosynthesis; L-histidine biosynthesis; L-histidine from 5-phospho-alpha-D-ribose 1-diphosphate: step 6/9. It participates in amino-acid biosynthesis; L-histidine biosynthesis; L-histidine from 5-phospho-alpha-D-ribose 1-diphosphate: step 8/9. In Legionella pneumophila subsp. pneumophila (strain Philadelphia 1 / ATCC 33152 / DSM 7513), this protein is Histidine biosynthesis bifunctional protein HisB.